A 151-amino-acid polypeptide reads, in one-letter code: Calmodulin-like protein 9 (151 aa).

4 EF-hand domains span residues 8-43 (EQIQ…MGKN), 44-79 (PKAE…NTSQ), 81-116 (SASD…MGMK), and 117-151 (ITAE…AASY). Positions 94, 96, 98, 105, 130, 132, 134, and 141 each coordinate Ca(2+).

This sequence belongs to the calmodulin family. In terms of assembly, interacts with IQD1. Interacts with ILK1. Binds to ABCG36. Expressed in leaves, flowers and siliques.

Its function is as follows. Potential calcium sensor. The sequence is that of Calmodulin-like protein 9 from Arabidopsis thaliana (Mouse-ear cress).